Reading from the N-terminus, the 600-residue chain is Zinc metalloproteinase-disintegrin-like stejnihagin-B (600 aa).

An N-terminal signal peptide occupies residues 1–20 (MIEVLLVTICLAVFPYQGSS). Positions 21–191 (IILESGNVND…KASQLVVTAE (171 aa)) are excised as a propeptide. Glutamine 192 is modified (pyrrolidone carboxylic acid). The 192-residue stretch at 198–389 (RYVKLAIVAD…YNPQCILNAL (192 aa)) folds into the Peptidase M12B domain. Residues asparagine 261 and asparagine 317 are each glycosylated (N-linked (GlcNAc...) asparagine). Intrachain disulfides connect cysteine 306–cysteine 384, cysteine 346–cysteine 368, and cysteine 348–cysteine 351. A Zn(2+)-binding site is contributed by histidine 331. Glutamate 332 is an active-site residue. Histidine 335 and histidine 341 together coordinate Zn(2+). Residues 397-483 (PPVCGNELLE…DCPTDSFHRN (87 aa)) form the Disintegrin domain. Ca(2+) is bound by residues valine 399, asparagine 402, leucine 404, glutamate 406, glutamate 409, and aspartate 412. 14 disulfides stabilise this stretch: cysteine 400–cysteine 429, cysteine 411–cysteine 424, cysteine 413–cysteine 419, cysteine 423–cysteine 446, cysteine 437–cysteine 443, cysteine 442–cysteine 468, cysteine 455–cysteine 475, cysteine 462–cysteine 494, cysteine 487–cysteine 499, cysteine 506–cysteine 556, cysteine 521–cysteine 565, cysteine 534–cysteine 544, cysteine 551–cysteine 587, and cysteine 581–cysteine 593. An N-linked (GlcNAc...) asparagine glycan is attached at asparagine 425. The D/ECD-tripeptide motif lies at 461–463 (ECD). An N-linked (GlcNAc...) asparagine glycan is attached at asparagine 467. Asparagine 513 carries N-linked (GlcNAc...) asparagine glycosylation.

The protein belongs to the venom metalloproteinase (M12B) family. P-III subfamily. P-IIIa sub-subfamily. Monomer. The cofactor is Zn(2+). As to expression, expressed by the venom gland.

The protein localises to the secreted. In terms of biological role, this metalloproteinase-disintegrin-like impairs hemostasis in the envenomed animal. The protein is Zinc metalloproteinase-disintegrin-like stejnihagin-B of Trimeresurus stejnegeri (Chinese green tree viper).